Consider the following 205-residue polypeptide: Arginine exporter protein ArgO (205 aa).

The next 6 membrane-spanning stretches (helical) occupy residues 1-21 (MLAV…PLGP), 42-62 (LCAL…SALL), 67-87 (LLLA…GWGA), 111-131 (ILVT…DTFV), 147-167 (WFAL…ALLA), and 185-205 (LFVG…GFGL).

It belongs to the LysE/ArgO transporter (TC 2.A.75) family.

It is found in the cell inner membrane. The catalysed reaction is L-arginine(in) = L-arginine(out). In terms of biological role, involved in the export of arginine. Important to control the intracellular level of arginine and the correct balance between arginine and lysine. The chain is Arginine exporter protein ArgO from Yersinia pseudotuberculosis serotype IB (strain PB1/+).